A 556-amino-acid polypeptide reads, in one-letter code: U-box domain-containing protein 38 (556 aa).

Residues 1 to 34 (MGKNGRLRWNPFSHRSSSSTSSSSRQQQQEQQPP) form a disordered region. Residues 13 to 32 (SHRSSSSTSSSSRQQQQEQQ) show a composition bias toward low complexity. The 77-residue stretch at 32-108 (QPPVEFLCPI…DTWCDTVGVS (77 aa)) folds into the U-box domain. 5 ARM repeats span residues 256 to 295 (DEARVSLCSPRILSLLKNMIVSRYSLVQTNALASLVNLSL), 297 to 336 (KKNKLTIVRLGFVPILIDVLKSGSREAQEHAAGTIFSLSL), 338 to 378 (DDNK…HLTL), 380 to 417 (QTNRSKLVRLGAVPALFSMVRSGESASRALLVICNLAC), and 418 to 468 (CSEG…ALSH).

As to quaternary structure, binds to SD16, SD17, SD18 and SD129.

The catalysed reaction is S-ubiquitinyl-[E2 ubiquitin-conjugating enzyme]-L-cysteine + [acceptor protein]-L-lysine = [E2 ubiquitin-conjugating enzyme]-L-cysteine + N(6)-ubiquitinyl-[acceptor protein]-L-lysine.. The protein operates within protein modification; protein ubiquitination. In terms of biological role, functions as an E3 ubiquitin ligase. This Arabidopsis thaliana (Mouse-ear cress) protein is U-box domain-containing protein 38 (PUB38).